The following is a 515-amino-acid chain: Probable cytosol aminopeptidase (515 aa).

Residues K279 and D284 each contribute to the Mn(2+) site. Residue K291 is part of the active site. The Mn(2+) site is built by D302, D361, and E363. R365 is a catalytic residue.

It belongs to the peptidase M17 family. It depends on Mn(2+) as a cofactor.

It localises to the cytoplasm. The catalysed reaction is Release of an N-terminal amino acid, Xaa-|-Yaa-, in which Xaa is preferably Leu, but may be other amino acids including Pro although not Arg or Lys, and Yaa may be Pro. Amino acid amides and methyl esters are also readily hydrolyzed, but rates on arylamides are exceedingly low.. It carries out the reaction Release of an N-terminal amino acid, preferentially leucine, but not glutamic or aspartic acids.. Functionally, presumably involved in the processing and regular turnover of intracellular proteins. Catalyzes the removal of unsubstituted N-terminal amino acids from various peptides. This chain is Probable cytosol aminopeptidase, found in Mycobacterium tuberculosis (strain ATCC 25177 / H37Ra).